Consider the following 92-residue polypeptide: Phospholemman (92 aa).

The signal sequence occupies residues Met-1–Ala-20. Topologically, residues Glu-21 to Thr-35 are extracellular. The chain crosses the membrane as a helical span at residues Leu-36–Leu-56. The Cytoplasmic portion of the chain corresponds to Ser-57–Arg-92. Cys-60 carries the S-palmitoyl cysteine lipid modification. At Cys-62 the chain carries S-glutathionyl cysteine; alternate. Cys-62 carries the S-palmitoyl cysteine; alternate lipid modification. The segment at Gln-66–Arg-92 is disordered. At Thr-79 the chain carries Phosphothreonine. Ser-82 is modified (phosphoserine). A Phosphoserine; by PKA and PKC modification is found at Ser-83. Basic residues predominate over residues Ser-83–Arg-92. The residue at position 88 (Ser-88) is a Phosphoserine; by PKA. Residue Thr-89 is modified to Phosphothreonine; by PKC.

Belongs to the FXYD family. Homotetramer. Monomer. Regulatory subunit of the sodium/potassium-transporting ATPase (NKA) which is composed of a catalytic alpha subunit, a non-catalytic beta subunit and an additional regulatory subunit. The monomeric form associates with NKA while the oligomeric form does not. Interacts with the catalytic alpha-1 subunit ATP1A1. Also interacts with the catalytic alpha-2 and alpha-3 subunits ATP1A2 and ATP1A3. Very little interaction with ATP1A1, ATP1A2 or ATP1A3 when phosphorylated at Ser-83. Interacts with the non-catalytic beta-1 subunit ATP1B1. Oxidative stress decreases interaction with ATP1A1 but increases interaction with ATP1B1. In terms of processing, major plasma membrane substrate for cAMP-dependent protein kinase (PKA) and protein kinase C (PKC) in several different tissues. Phosphorylated in response to insulin and adrenergic stimulation. Phosphorylation at Ser-88 stimulates sodium/potassium-transporting ATPase activity while the unphosphorylated form inhibits sodium/potassium-transporting ATPase activity. Phosphorylation increases tetramerization, decreases binding to ATP1A1 and reduces inhibition of ATP1A1 activity. Phosphorylation at Ser-83 leads to greatly reduced interaction with ATP1A1, ATP1A2 and ATP1A3. May be phosphorylated by DMPK. Post-translationally, palmitoylation increases half-life and stability and is enhanced upon phosphorylation at Ser-88 by PKA. In terms of tissue distribution, in adult brain, highest levels are found in the cerebellum and in the lateral, third and fourth ventricles of the choroid plexus (at protein level). Also detected in cells of a portion of the ependymal lining of the lateral ventricle on its rostral surface posterior to the caudate putamen (at protein level). Expressed in a subset of neurons which secrete gonadotropin-releasing hormone.

It localises to the cell membrane. The protein localises to the sarcolemma. Its subcellular location is the apical cell membrane. It is found in the membrane. The protein resides in the caveola. It localises to the T-tubule. In terms of biological role, associates with and regulates the activity of the sodium/potassium-transporting ATPase (NKA) which transports Na(+) out of the cell and K(+) into the cell. Inhibits NKA activity in its unphosphorylated state and stimulates activity when phosphorylated. Reduces glutathionylation of the NKA beta-1 subunit ATP1B1, thus reversing glutathionylation-mediated inhibition of ATP1B1. Contributes to female sexual development by maintaining the excitability of neurons which secrete gonadotropin-releasing hormone. The sequence is that of Phospholemman from Rattus norvegicus (Rat).